The following is a 345-amino-acid chain: 4-hydroxy-2-oxovalerate aldolase 1 (345 aa).

The Pyruvate carboxyltransferase domain occupies 9–261; the sequence is IRVTDTSLRD…RTGIDFFAIA (253 aa). 17-18 lines the substrate pocket; the sequence is RD. Residue D18 coordinates Mn(2+). H21 (proton acceptor) is an active-site residue. Positions 171 and 200 each coordinate substrate. Positions 200 and 202 each coordinate Mn(2+). Y291 contacts substrate.

Belongs to the 4-hydroxy-2-oxovalerate aldolase family.

The enzyme catalyses (S)-4-hydroxy-2-oxopentanoate = acetaldehyde + pyruvate. The sequence is that of 4-hydroxy-2-oxovalerate aldolase 1 from Nocardia farcinica (strain IFM 10152).